The following is a 313-amino-acid chain: Ribosomal RNA small subunit methyltransferase H (313 aa).

Residues Gly-35–Tyr-37, Asp-53, Phe-80, Asp-101, and Gln-108 contribute to the S-adenosyl-L-methionine site.

The protein belongs to the methyltransferase superfamily. RsmH family.

It localises to the cytoplasm. It carries out the reaction cytidine(1402) in 16S rRNA + S-adenosyl-L-methionine = N(4)-methylcytidine(1402) in 16S rRNA + S-adenosyl-L-homocysteine + H(+). Specifically methylates the N4 position of cytidine in position 1402 (C1402) of 16S rRNA. This chain is Ribosomal RNA small subunit methyltransferase H, found in Acidiphilium cryptum (strain JF-5).